Here is a 512-residue protein sequence, read N- to C-terminus: Glutamate--tRNA ligase (512 aa).

The short motif at 11 to 21 is the 'HIGH' region element; it reads PSPTGALHIGG. Residues 263-267 carry the 'KMSKS' region motif; the sequence is KLSKR. Residue Lys-266 coordinates ATP.

This sequence belongs to the class-I aminoacyl-tRNA synthetase family. Glutamate--tRNA ligase type 1 subfamily. In terms of assembly, monomer.

The protein localises to the cytoplasm. The catalysed reaction is tRNA(Glu) + L-glutamate + ATP = L-glutamyl-tRNA(Glu) + AMP + diphosphate. In terms of biological role, catalyzes the attachment of glutamate to tRNA(Glu) in a two-step reaction: glutamate is first activated by ATP to form Glu-AMP and then transferred to the acceptor end of tRNA(Glu). The polypeptide is Glutamate--tRNA ligase (Amoebophilus asiaticus (strain 5a2)).